The following is a 277-amino-acid chain: MNKILEVENLVFKYEKESDVNQLNGVSFSITKGEWVSIIGQNGSGKSTTARLIDGLFEEFEGKVKIDGELLTAENVWNLRRKIGMVFQNPDNQFVGATVEDDVAFGMENQGIPREEMIKRVDEALLAVNMLDFKTREPARLSGGQKQRVAVAGIIALRPEIIILDESTSMLDPTGRQEIMRVIHEIKEKYQLTVLSITHDLDEAASSDRILVMKAGEIIKEAAPSELFATSEDMVEIGLDVPFSSNLMKDLRKNGFDLPEKYLSEDELVELLADKLR.

The region spanning Leu5–Asp240 is the ABC transporter domain. Gly40–Ser47 lines the ATP pocket.

It belongs to the ABC transporter superfamily. Energy-coupling factor EcfA family. In terms of assembly, forms a stable energy-coupling factor (ECF) transporter complex composed of 2 membrane-embedded substrate-binding proteins (S component), 2 ATP-binding proteins (A component) and 2 transmembrane proteins (T component).

Its subcellular location is the cell membrane. ATP-binding (A) component of a common energy-coupling factor (ECF) ABC-transporter complex. Unlike classic ABC transporters this ECF transporter provides the energy necessary to transport a number of different substrates. This chain is Energy-coupling factor transporter ATP-binding protein EcfA1, found in Lactococcus lactis subsp. lactis (strain IL1403) (Streptococcus lactis).